The following is a 67-amino-acid chain: DNA-directed RNA polymerase subunit omega (67 aa).

This sequence belongs to the RNA polymerase subunit omega family. As to quaternary structure, the RNAP catalytic core consists of 2 alpha, 1 beta, 1 beta' and 1 omega subunit. When a sigma factor is associated with the core the holoenzyme is formed, which can initiate transcription.

It carries out the reaction RNA(n) + a ribonucleoside 5'-triphosphate = RNA(n+1) + diphosphate. In terms of biological role, promotes RNA polymerase assembly. Latches the N- and C-terminal regions of the beta' subunit thereby facilitating its interaction with the beta and alpha subunits. This is DNA-directed RNA polymerase subunit omega from Polaromonas naphthalenivorans (strain CJ2).